Reading from the N-terminus, the 412-residue chain is Phosphoglycerate kinase (412 aa).

Residues Val20, Asp21, Phe22, Asn23, Gln35, Arg36, Ser59, His60, Gly62, Arg63, Leu118, Arg119, His166, and Arg167 each coordinate (2R)-3-phosphoglycerate. Gly210 contributes to the ADP binding site. Residue Gly210 participates in CDP binding. Residues Ala211 and Lys212 each contribute to the AMP site. Ala211 contributes to the ATP binding site. Ala211 contacts Mg(2+). Mg(2+) contacts are provided by Ala214 and Asp215. Asp215 contacts CDP. Position 216 (Lys216) interacts with AMP. Residue Lys216 coordinates ATP. Gly234 provides a ligand contact to ADP. Gly234 contributes to the CDP binding site. 2 residues coordinate AMP: Gly235 and Gly308. ATP is bound by residues Gly235 and Gly308. Gly333 and Phe338 together coordinate CDP. Phe338 serves as a coordination point for ADP. Glu339 contacts AMP. Glu339, Asp370, and Thr371 together coordinate ATP. Asp370 provides a ligand contact to Mg(2+).

It belongs to the phosphoglycerate kinase family. In terms of assembly, monomer. It depends on Mg(2+) as a cofactor.

Its subcellular location is the cytoplasm. It catalyses the reaction (2R)-3-phosphoglycerate + ATP = (2R)-3-phospho-glyceroyl phosphate + ADP. Its pathway is carbohydrate degradation; glycolysis; pyruvate from D-glyceraldehyde 3-phosphate: step 2/5. In terms of biological role, catalyzes one of the two ATP producing reactions in the glycolytic pathway via the reversible conversion of 1,3-diphosphoglycerate to 3-phosphoglycerate. In addition to its role as a glycolytic enzyme, it seems that PGK-1 acts as a polymerase alpha cofactor protein (primer recognition protein). May play a role in sperm motility. In Aplysia californica (California sea hare), this protein is Phosphoglycerate kinase (PGK).